We begin with the raw amino-acid sequence, 566 residues long: Chondroitin sulfate proteoglycan 5 (566 aa).

A signal peptide spans 1-30 (MGRAGGGGPDWGPPPVLLLLGVTLVLTAGA). Residues 31–423 (VPARETGSAI…SIITDFQVMC (393 aa)) are Extracellular-facing. Ser38 carries O-linked (Xyl...) (chondroitin sulfate) serine glycosylation. Residues 56-93 (ANDTREEAGLPAAGEDETSWTERGSEMAAVGPGVGPEE) form a disordered region. Asn57 carries N-linked (GlcNAc...) asparagine glycosylation. O-linked (GalNAc...) threonine glycosylation occurs at Thr76. The O-linked (Xyl...) (chondroitin sulfate) serine glycan is linked to Ser123. O-linked (GalNAc...) threonine glycosylation is present at Thr132. Disordered regions lie at residues 137–173 (DEALGSSTMPPAIPEATETSGPPSPAVHDKPSVGPEL), 218–249 (DSEGRGADMGSFPGSPGTSENHPDTEGETPSW), and 263–327 (ESDF…PPQH). Residue Ser143 is glycosylated (O-linked (GalNAc...) serine). Thr144, Thr153, and Thr155 each carry an O-linked (GalNAc...) threonine glycan. O-linked (GalNAc...) serine glycosylation is found at Ser156 and Ser160. Residues 163-173 (VHDKPSVGPEL) show a composition bias toward basic and acidic residues. O-linked (GalNAc...) threonine glycosylation occurs at Thr235. The interaction with TNC and TNR stretch occupies residues 265–301 (DFYPTTSFYDDLEEEEEEEEDKDTVGGGDLEDENDLL). Positions 274-286 (DDLEEEEEEEEDK) are enriched in acidic residues. Residues Asn355 and Asn367 are each glycosylated (N-linked (GlcNAc...) asparagine). Positions 371–413 (RSVCDLFPSYCHNGGQCYLVENIGAFCRCNTQDYIWHKGMRCE) constitute an EGF-like domain. 3 disulfide bridges follow: Cys374-Cys387, Cys381-Cys397, and Cys399-Cys412. Residues Gly394 and Phe396 each carry the phosphoserine modification. Residue Cys397 is modified to Phosphothreonine. Residues 424–444 (VAVGSAALVLLLLFMMTVFFA) traverse the membrane as a helical segment. Residues 442-460 (FFAKKLYLLKTENTKLRRT) form an interaction with GOPC region. Topologically, residues 445-566 (KKLYLLKTEN…GVNCLQNNLT (122 aa)) are cytoplasmic. Phosphoserine occurs at positions 467, 475, and 477. Thr478 carries the post-translational modification Phosphothreonine. A phosphoserine mark is found at Ser483 and Ser543. Residues 531-566 (KEEESFNIQNSMSPKLEGGKGDQDDLGVNCLQNNLT) are disordered.

Binds TNR and probably TNC. Interacts with ERBB3 and GOPC. Interacts with MDK; this interaction is independent of the presence of chondroitin sulfate chains and promotes elongation of oligodendroglial precursor-like cells. Post-translationally, N-glycosylated. In terms of processing, O-glycosylated; contains chondroitin sulfate glycans. Part-time proteoglycan, expressed in part as a proteoglycan exhibiting chondroitin sulfate glycans and in part as a non-proteoglycan form. The relative amount of both forms depends on tissues and tissue maturation. In the cerebellum the 2 forms coexist while in the cerebrum the proteoglycan form is predominant. Phosphorylated; in intracellular and extracellular parts. As to expression, expressed in olfactory bulb, hippocampus, brain stem, spinal cord, cerebrum and cerebellum. Expressed by Purkinje cells in the cerebellum (at protein level). Expressed in immature and mature cerebellum (isoform 1, isoform 2 and isoform 3).

Its subcellular location is the cell membrane. It localises to the synaptic cell membrane. The protein localises to the endoplasmic reticulum membrane. It is found in the golgi apparatus membrane. The protein resides in the cell surface. Its subcellular location is the secreted. Functionally, may function as a growth and differentiation factor involved in neuritogenesis. May induce ERBB3 activation. The sequence is that of Chondroitin sulfate proteoglycan 5 (Cspg5) from Mus musculus (Mouse).